The chain runs to 1198 residues: MDEETRHSLECIQANQIFPRKQLIREDENLQVPFLELHGESTEFVGRAEDAIIALSNYRLHIKFKESLVNVPLQLIESVECRDIFQLHLTCKDCKVIRCQFSTFEQCQEWLKRLNNAIRPPAKIEDLFSFAYHAWCMEVYASEKEQHGDLCRPGEHVTSRFKNEVERMGFDMNNAWRISNINEKYKLCGSYPQELIVPAWITDKELESVSSFRSWKRIPAVIYRHQSNGAVIARCGQPEVSWWGWRNADDEHLVQSVAKACASDSRSSGSKLSTRNTSRDFPNGGDLSDVEFDSSLSNASGAESLAIQPQKLLILDARSYAAAVANRAKGGGCECPEYYPNCEVVFMGMANIHSIRRSFQSLRLLCTQMPDPGNWLSALESTKWLHHLSVLLKSALLVVHAVDQDQRPVLVHCSDGWDRTPQIVALAKLLLDPYYRTIEGFQVLVEMEWLDFGHKFADRCGHGENSDDLNERCPVFLQWLDCVHQLQRQFPCSFEFNEAFLVKLVQHTYSCLFGTFLCNNAKERGEKHTQERTCSVWSLLRAGNKAFKNLLYSSQSEAVLYPVCHVRNLMLWSAVYLPCPSPTTPVDDSCAPYPAPGTSPDDPPLSRLPKTRSYDNLTTACDNTVPLASRRCSDPSLNEKWQEHRRSLELSSLAGPGEDPLSADSLGKPTRVPGGAELSVAAGVAEGQMENILQEATKEESGVEEPAHRAGIEIQEGKEDPLLEKESRRKTPEASAIGLHQDPELGDAALRSHLDMSWPLFSQGISEQQSGLSVLLSSLQVPPRGEDSLEVPVEQFRIEEIAEGREEAVLPIPVDAKVGYGTSQSCSLLPSQVPFETRGPNVDSSTDMLVEDKVKSVSGPQGHHRSCLVNSGKDRLPQTMEPSPSETSLVERPQVGSVVHRTSLGSTLSLTRSPCALPLAECKEGLVCNGAPETENRASEQPPGLSTLQMYPTPNGHCANGEAGRSKDSLSRQLSAMSCSSAHLHSRNLHHKWLHSHSGRPSATSSPDQPSRSHLDDDGMSVYTDTIQQRLRQIESGHQQEVETLKKQVQELKSRLESQYLTSSLHFNGDFGDEVTSIPDSESNLDQNCLSRCSTEIFSEASWEQVDKQDTEMTRWLPDHLAAHCYACDSAFWLASRKHHCRNCGNVFCSSCCNQKVPVPSQQLFEPSRVCKSCYSSLHPTSSSIDLELDKPIAATSN.

Residue serine 8 is modified to Phosphoserine. The region spanning 155-576 (EHVTSRFKNE…RNLMLWSAVY (422 aa)) is the Myotubularin phosphatase domain. Positions 265-280 (SRSSGSKLSTRNTSRD) are enriched in polar residues. Positions 265–285 (SRSSGSKLSTRNTSRDFPNGG) are disordered. The a 1,2-diacyl-sn-glycero-3-phospho-(1D-myo-inositol-3,5-bisphosphate) site is built by asparagine 326, asparagine 351, and isoleucine 352. A 1,2-diacyl-sn-glycero-3-phospho-(1D-myo-inositol-3-phosphate) contacts are provided by asparagine 326, asparagine 351, and isoleucine 352. Cysteine 413 acts as the Phosphocysteine intermediate in catalysis. Serine 414, aspartate 415, glycine 416, tryptophan 417, aspartate 418, arginine 419, lysine 455, and arginine 459 together coordinate a 1,2-diacyl-sn-glycero-3-phospho-(1D-myo-inositol-3,5-bisphosphate). A 1,2-diacyl-sn-glycero-3-phospho-(1D-myo-inositol-3-phosphate) is bound by residues serine 414, aspartate 415, glycine 416, tryptophan 417, aspartate 418, and arginine 419. Arginine 459 is a binding site for a 1,2-diacyl-sn-glycero-3-phospho-(1D-myo-inositol-3-phosphate). Residues 590-612 (CAPYPAPGTSPDDPPLSRLPKTR) are disordered. The segment covering 593 to 603 (YPAPGTSPDDP) has biased composition (pro residues). Serine 613, serine 633, serine 647, and serine 651 each carry phosphoserine. 3 disordered regions span residues 650–669 (LSSLAGPGEDPLSADSLGKP), 716–735 (EGKEDPLLEKESRRKTPEAS), and 855–891 (KSVSGPQGHHRSCLVNSGKDRLPQTMEPSPSETSLVE). Basic and acidic residues predominate over residues 716–732 (EGKEDPLLEKESRRKTP). Threonine 731 carries the post-translational modification Phosphothreonine. A phosphoserine mark is found at serine 906 and serine 909. Disordered regions lie at residues 933 to 974 (ETEN…SRQL) and 993 to 1019 (WLHSHSGRPSATSSPDQPSRSHLDDDG). Over residues 999–1010 (GRPSATSSPDQP) the composition is skewed to polar residues. A coiled-coil region spans residues 1029-1062 (QRLRQIESGHQQEVETLKKQVQELKSRLESQYLT). Position 1064 is a phosphoserine (serine 1064). Residues 1119–1179 (DHLAAHCYAC…VCKSCYSSLH (61 aa)) form an FYVE-type zinc finger. Zn(2+) contacts are provided by cysteine 1125, cysteine 1128, cysteine 1141, cysteine 1144, cysteine 1149, cysteine 1152, cysteine 1171, and cysteine 1174.

This sequence belongs to the protein-tyrosine phosphatase family. Non-receptor class myotubularin subfamily. In terms of assembly, forms heterodimers with MTMR4 that recruit both CEP55 and PLK1; occurs during early mitosis, regulates the phosphorylation of CEP55 by PLK1 and its recruitment to the midbody where it mediates cell abscission. Phosphorylated by CDK1 during mitosis.

It is found in the cytoplasm. The protein resides in the cytosol. It localises to the membrane. The enzyme catalyses a 1,2-diacyl-sn-glycero-3-phospho-(1D-myo-inositol-3,5-bisphosphate) + H2O = a 1,2-diacyl-sn-glycero-3-phospho-(1D-myo-inositol-5-phosphate) + phosphate. It catalyses the reaction a 1,2-diacyl-sn-glycero-3-phospho-(1D-myo-inositol-3-phosphate) + H2O = a 1,2-diacyl-sn-glycero-3-phospho-(1D-myo-inositol) + phosphate. It carries out the reaction 1,2-dihexadecanoyl-sn-glycero-3-phospho-(1D-myo-inositol-3-phosphate) + H2O = 1,2-dihexadecanoyl-sn-glycero-3-phospho-(1D-myo-inositol) + phosphate. The catalysed reaction is 1,2-dioctanoyl-sn-glycero-3-phospho-(1-D-myo-inositol-3-phosphate) + H2O = 1,2-dioctanoyl-sn-glycero-3-phospho-(1D-myo-inositol) + phosphate. The enzyme catalyses 1,2-dihexadecanoyl-sn-glycero-3-phospho-(1D-myo-inositol-3,5-phosphate) + H2O = 1,2-dihexadecanoyl-sn-glycero-3-phospho-(1D-myo-inositol-5-phosphate) + phosphate. Functionally, lipid phosphatase that specifically dephosphorylates the D-3 position of phosphatidylinositol 3-phosphate and phosphatidylinositol 3,5-bisphosphate, generating phosphatidylinositol and phosphatidylinositol 5-phosphate. Decreases the levels of phosphatidylinositol 3-phosphate, a phospholipid found in cell membranes where it acts as key regulator of both cell signaling and intracellular membrane traffic. Could also have a molecular sequestering/adapter activity and regulate biological processes independently of its phosphatase activity. It includes the regulation of midbody abscission during mitotic cytokinesis. This is Phosphatidylinositol-3,5-bisphosphate 3-phosphatase MTMR3 from Homo sapiens (Human).